The chain runs to 368 residues: Phosphate acyltransferase (368 aa).

It belongs to the PlsX family. In terms of assembly, homodimer. Probably interacts with PlsY.

The protein resides in the cytoplasm. The enzyme catalyses a fatty acyl-[ACP] + phosphate = an acyl phosphate + holo-[ACP]. The protein operates within lipid metabolism; phospholipid metabolism. Catalyzes the reversible formation of acyl-phosphate (acyl-PO(4)) from acyl-[acyl-carrier-protein] (acyl-ACP). This enzyme utilizes acyl-ACP as fatty acyl donor, but not acyl-CoA. In Cereibacter sphaeroides (strain ATCC 17025 / ATH 2.4.3) (Rhodobacter sphaeroides), this protein is Phosphate acyltransferase.